The following is a 285-amino-acid chain: E2F-associated phosphoprotein (285 aa).

The residue at position 1 (Met-1) is an N-acetylmethionine. Positions Met-1–Val-30 are disordered. The segment covering Glu-15–Val-30 has biased composition (acidic residues). A Phosphoserine modification is found at Ser-17. Residue Thr-37 is modified to Phosphothreonine. The interval Cys-48–Thr-96 is disordered. Acidic residues predominate over residues Ser-55–Ala-67. Low complexity predominate over residues Ser-81 to Gly-92. Phosphoserine is present on residues Ser-109 and Ser-111. Positions Val-118–Asp-144 are disordered. Residues Thr-121–Lys-130 show a composition bias toward basic residues.

In terms of assembly, interacts with E2F1. The C-terminal half binds the N-terminal of E2F1. Also interacts with E2F2 and E2F3, but not E2F4. Ubiquitously expressed. Highest levels in heart, placenta, skeletal muscle and pancreas. Lower levels in brain, lung and kidney. In the brain, expressed in all regions with high levels in the cerebellum and cerebral cortex. Expressed in COS1 and transformed skin fibroblasts.

It localises to the cytoplasm. The protein localises to the nucleus. In terms of biological role, may play an important role in the fine-tuning of both major E2F1 activities, the regulation of the cell-cycle and the induction of apoptosis. Promotes S-phase entry, and inhibits p14(ARP) expression. This chain is E2F-associated phosphoprotein (EAPP), found in Homo sapiens (Human).